Reading from the N-terminus, the 591-residue chain is MEMQDLTSPHSRLSGSSESPSGPKLDSSHINSTSMTPNGTEVKTEPMSSSEIASTAADGSLDSFSGSALGSSSFSPRPAHPFSPPQIYPSKSYPHILPTPSSQTMAAYGQTQFTTGMQQATAYATYPQPGQPYGISSYGALWAGIKTESGLSQSQSPGQTGFLSYGTSFGTPQPGQAPYSYQMQGSSFTTSSGLYSGNNSLTNSSGFNSSQQDYPSYPGFGQGQYAQYYNSSPYPAHYMTSSNTSPTTPSTNATYQLQEPPSGVTSQAVTDPTAEYSTIHSPSTPIKETDSERLRRGSDGKSRGRGRRNNNPSPPPDSDLERVFIWDLDETIIVFHSLLTGSYANRYGRDPPTSVSLGLRMEEMIFNLADTHLFFNDLEECDQVHIDDVSSDDNGQDLSTYNFGTDGFPAAATSANLCLATGVRGGVDWMRKLAFRYRRVKEIYNTYKNNVGGLLGPAKREAWLQLRAEIEALTDSWLTLALKALSLIHSRTNCVNILVTTTQLIPALAKVLLYGLGIVFPIENIYSATKIGKESCFERIIQRFGRKVVYVVIGDGVEEEQGAKKHAMPFWRVSSHSDLMALHHALELEYL.

Disordered regions lie at residues 1-95, 150-169, and 239-319; these read MEMQ…SYPH, GLSQ…GTSF, and MTSS…PDSD. The span at 8–23 shows a compositional bias: low complexity; sequence SPHSRLSGSSESPSGP. Residues 28–53 are compositionally biased toward polar residues; that stretch reads SHINSTSMTPNGTEVKTEPMSSSEIA. A compositionally biased stretch (low complexity) spans 56–75; that stretch reads AADGSLDSFSGSALGSSSFS. Positions 78–87 are enriched in pro residues; the sequence is PAHPFSPPQI. Residues 240–252 show a composition bias toward low complexity; it reads TSSNTSPTTPSTN. Residues 253–286 show a composition bias toward polar residues; the sequence is ATYQLQEPPSGVTSQAVTDPTAEYSTIHSPSTPI. Over residues 287-302 the composition is skewed to basic and acidic residues; the sequence is KETDSERLRRGSDGKS. Aspartate 327 serves as the catalytic Nucleophile. Residues aspartate 327, aspartate 329, and aspartate 555 each contribute to the Mg(2+) site. Catalysis depends on aspartate 329, which acts as the Proton donor.

It belongs to the HAD-like hydrolase superfamily. EYA family. Probably interacts with SIX2, SIX4 and SIX5. Interacts with H2AX in response to DNA damage. Interacts with SIX3; promotes EYA1 translocation to the nucleus. Mg(2+) is required as a cofactor. Post-translationally, sumoylated with SUMO1. As to expression, extensively expressed in cranial placodes, branchial arches, CNS and developing eye and nose.

The protein resides in the cytoplasm. Its subcellular location is the nucleus. The enzyme catalyses O-phospho-L-tyrosyl-[protein] + H2O = L-tyrosyl-[protein] + phosphate. The catalysed reaction is O-phospho-L-seryl-[protein] + H2O = L-seryl-[protein] + phosphate. It catalyses the reaction O-phospho-L-threonyl-[protein] + H2O = L-threonyl-[protein] + phosphate. Functionally, functions both as protein phosphatase and as transcriptional coactivator for SIX1, and probably also for SIX2, SIX4 and SIX5. Tyrosine phosphatase that dephosphorylates 'Tyr-142' of histone H2AX (H2AXY142ph) and promotes efficient DNA repair via the recruitment of DNA repair complexes containing MDC1. 'Tyr-142' phosphorylation of histone H2AX plays a central role in DNA repair and acts as a mark that distinguishes between apoptotic and repair responses to genotoxic stress. Its function as histone phosphatase may contribute to its function in transcription regulation during organogenesis. Also has phosphatase activity with proteins phosphorylated on Ser and Thr residues (in vitro). Required for normal embryonic development of the craniofacial and trunk skeleton, kidneys and ears. Together with SIX1, it plays an important role in hypaxial muscle development; in this it is functionally redundant with EYA2. The protein is Protein phosphatase EYA1 (Eya1) of Mus musculus (Mouse).